Reading from the N-terminus, the 147-residue chain is MDELDRQLINRLQHGLPLVRHPWEALAEELGSTAEVLRLRVQALLDDGTLTRFGPMFDIDRLGGAFTLAALSVPEARFDAVAAQLEAMPEVAHNYRREHQWNMWFVLGCETPQGITETIARIEAQTGLTVLNLPKEETFHVGLHFPV.

This sequence belongs to the Ahb/Nir family. As to quaternary structure, probably forms a complex composed of NirD, NirL, NirG and NirH. All proteins are required for the total conversion of siroheme to didecarboxysiroheme.

It carries out the reaction siroheme + 2 H(+) = 12,18-didecarboxysiroheme + 2 CO2. The protein operates within porphyrin-containing compound metabolism. Involved in heme d1 biosynthesis. Catalyzes the decarboxylation of siroheme into didecarboxysiroheme. In Stutzerimonas stutzeri (Pseudomonas stutzeri), this protein is Siroheme decarboxylase NirG subunit.